Here is a 1070-residue protein sequence, read N- to C-terminus: DNA-directed RNA polymerase subunit beta (1070 aa).

It belongs to the RNA polymerase beta chain family. As to quaternary structure, in plastids the minimal PEP RNA polymerase catalytic core is composed of four subunits: alpha, beta, beta', and beta''. When a (nuclear-encoded) sigma factor is associated with the core the holoenzyme is formed, which can initiate transcription.

It is found in the plastid. It catalyses the reaction RNA(n) + a ribonucleoside 5'-triphosphate = RNA(n+1) + diphosphate. Functionally, DNA-dependent RNA polymerase catalyzes the transcription of DNA into RNA using the four ribonucleoside triphosphates as substrates. This is DNA-directed RNA polymerase subunit beta (rpoB) from Cuscuta reflexa (Southern Asian dodder).